The following is a 977-amino-acid chain: SLIT and NTRK-like protein 3 (977 aa).

Positions 1-26 (MKPSIAEMLHRGRMLWIILLSTIALG) are cleaved as a signal peptide. Topologically, residues 29–654 (TPIPLIEDSE…SPPGGPVPLS (626 aa)) are extracellular. The N-linked (GlcNAc...) asparagine glycan is linked to Asn68. 6 LRR repeats span residues 78-99 (RPFK…SFLH), 102-123 (NAVS…AFNG), 126-147 (ILKR…TFLG), 150-171 (SLEY…AFRN), 174-195 (KLRV…LFKA), and 197-218 (SLTH…GMLD). In terms of domain architecture, LRRCT 1 spans 232–283 (NPWNCTCEIVQLKSWLERIPYTALVGDITCETPFHFHGKDLREIRKTELCPL). The tract at residues 325 to 360 (EYKSSNKQPKPTKQPRTPRPPSTSQALYPGPNQPPI) is disordered. An LRRNT domain is found at 364–406 (QTRPPIPIICPTGCTCNLHINDLGLTVNCKERGFNNISELLPR). 6 LRR repeats span residues 409-430 (NAKK…DFWN), 433-454 (SLDL…AFIN), 457-478 (NLKS…MFRG), 481-502 (SLHY…AFSL), 505-526 (NLKL…AFAG), and 528-549 (SLAR…GVLE). Residues 562 to 613 (NPWDCTCDLVPFKQWIETISSVSVVGDVLCRSPENLTHRDVRTIELEVLCPE) form the LRRCT 2 domain. An N-linked (GlcNAc...) asparagine glycan is attached at Asn596. Residues 655–675 (VLILSLLVLFFSAVFVAAGLF) traverse the membrane as a helical segment. Residues 676-977 (AYVLRRRRKK…EVLEKTTYRF (302 aa)) lie on the Cytoplasmic side of the membrane. 2 disordered regions span residues 708–735 (LFED…KAPP) and 761–790 (EEEV…MGEA). Residues 711–724 (DGGGGGGGSGGGGR) show a composition bias toward gly residues. Residues 765-775 (AVSSAQEAGSA) show a composition bias toward low complexity.

The protein belongs to the SLITRK family. As to expression, expressed in the occipital lobe of the cerebral cortex of the brain. Expressed at higher levels in some astrocytic brain tumors such as astrocytomas, oligodendrogliomas, glioblastomas, gangliogliomas and primitive neuroectodermal tumors.

The protein resides in the membrane. Its function is as follows. Suppresses neurite outgrowth. This is SLIT and NTRK-like protein 3 (SLITRK3) from Homo sapiens (Human).